We begin with the raw amino-acid sequence, 1193 residues long: Tubulin monoglutamylase TTLL4 (1193 aa).

Disordered stretches follow at residues 1 to 37 and 468 to 535; these read MASA…EKPS and VHLD…CSSL. Residues 24-34 show a composition bias toward polar residues; the sequence is PSGTVSASPSE. Over residues 472–482 the composition is skewed to basic and acidic residues; that stretch reads QPGKEPEEAKD. The segment covering 502–515 has biased composition (acidic residues); it reads EPEDTEDELGDGLE. In terms of domain architecture, TTL spans 599 to 942; it reads RRLLRWKMST…VLPNMEDIIS (344 aa). Residue Ser686 is modified to Phosphoserine. Residues Lys716, 722 to 723, 744 to 747, and 757 to 759 each bind ATP; these read RG, QRYL, and KFD. Arg722 provides a ligand contact to a protein. Residue Arg783 participates in L-glutamate binding. ATP is bound at residue 804–805; sequence TN. Tyr806, Ser807, and Lys828 together coordinate L-glutamate. 3 residues coordinate Mg(2+): Asp888, Glu901, and Asn903. The c-MTBD region stretch occupies residues 913-1027; that stretch reads PLDISIKGQM…RGQFERIFPS (115 aa). Residue Lys919 coordinates L-glutamate. The span at 943–960 shows a compositional bias: low complexity; the sequence is SSSSPSSSSGSSTSLPSS. 2 disordered regions span residues 943 to 966 and 1092 to 1193; these read SSSS…DKCQ and MTTS…AVSS. Composition is skewed to polar residues over residues 1092–1102 and 1131–1153; these read MTTSKGDGTPN and SQAG…NTSK. The span at 1168–1182 shows a compositional bias: low complexity; it reads SGQSSRLSAASASQS. Positions 1183-1193 are enriched in polar residues; that stretch reads VTDSRLTAVSS.

It belongs to the tubulin--tyrosine ligase family. It depends on Mg(2+) as a cofactor. In terms of tissue distribution, highly expressed in testis. Expressed in brain, heart, kidney, liver, lung, muscle and spleen. In the brain, expressed in ependymal cilia, the cortex and the striatum. Expressed in blastomere.

Its subcellular location is the cytoplasm. It localises to the cell projection. The protein localises to the cilium. It is found in the cytoskeleton. The protein resides in the cilium basal body. It catalyses the reaction L-glutamyl-[protein] + L-glutamate + ATP = gamma-L-glutamyl-L-glutamyl-[protein] + ADP + phosphate + H(+). Its function is as follows. Monoglutamylase which modifies both tubulin and non-tubulin proteins, adding a single glutamate on the gamma-carboxyl group of specific glutamate residues of target proteins. Involved in the side-chain initiation step of the polyglutamylation reaction but not in the elongation step. Preferentially modifies beta-tail tubulin over the alpha-tubulin. Monoglutamylates nucleosome assembly proteins NAP1L1 and NAP1L4. Monoglutamylates nucleotidyltransferase CGAS, leading to inhibition of CGAS catalytic activity, thereby preventing antiviral defense function. Involved in KLF4 glutamylation which impedes its ubiquitination, thereby leading to somatic cell reprogramming, pluripotency maintenance and embryogenesis. In Mus musculus (Mouse), this protein is Tubulin monoglutamylase TTLL4.